The sequence spans 299 residues: Nucleotide-binding protein SAV_6292 (299 aa).

23–30 (GMSGAGRS) lines the ATP pocket. GTP is bound at residue 74 to 77 (DVRG).

The protein belongs to the RapZ-like family.

Displays ATPase and GTPase activities. The polypeptide is Nucleotide-binding protein SAV_6292 (Streptomyces avermitilis (strain ATCC 31267 / DSM 46492 / JCM 5070 / NBRC 14893 / NCIMB 12804 / NRRL 8165 / MA-4680)).